The following is a 493-amino-acid chain: Trichothecene 8-O-acetyltransferase (493 aa).

The span at 180–191 (QDQNENEVQQPK) shows a compositional bias: polar residues. The segment at 180 to 199 (QDQNENEVQQPKNLPDPDEP) is disordered.

The protein operates within sesquiterpene biosynthesis; trichothecene biosynthesis. Functionally, trichothecene 8-O-acetyltransferase; part of 2-gene cluster involved in trichothecene C-8 modification that mediates the biosynthesis of T2-toxin. The biosynthesis of trichothecenes begins with the cyclization of farnesyl diphosphate to trichodiene and is catalyzed by the trichodiene synthase TRI5. Trichodiene undergoes a series of oxygenations catalyzed by the cytochrome P450 monooxygenase TRI4. TRI4 controls the addition of four oxygens at C-2, C-3, C-11, and the C-12, C-13-epoxide to form the intermediate isotrichotriol. Isotrichotriol then undergoes a non-enzymatic isomerization and cyclization to form isotrichodermol. During this process, the oxygen at the C-2 position becomes the pyran ring oxygen and the hydroxyl group at C-11 is lost. More complex type A trichothecenes are built by modifying isotrichodermol through a series of paired hydroxylation and acetylation or acylation steps. Isotrichodermol is converted to isotrichodermin by the acetyltransferase TRI101. TRI101 encodes a C-3 transacetylase that acts as a self-protection or resistance factor during biosynthesis and that the presence of a free C-3 hydroxyl group is a key component of Fusarium trichothecene phytotoxicity. A second hydroxyl group is added to C-15 by the trichothecene C-15 hydroxylase TRI11, producing 15-decalonectrin, which is then acetylated by TRI3, producing calonectrin. A third hydroxyl group is added at C-4 by the cytochrome P450 monooxygenase TRI13, converting calonectrin to 3,15-diacetoxyspirpenol, which is subsequently acetylated bythe acetyltransferase TRI7. A fourth hydroxyl group is added to C-8 by the cytochrome P450 monooxygenase TRI1, followed by the addition of an isovaleryl moiety by TRI16. Finally, the acetyl group is removed from the C-3 position by the trichothecene C-3 esterase TRI8 to produce T-2 toxin. The chain is Trichothecene 8-O-acetyltransferase from Fusarium sporotrichioides.